Consider the following 270-residue polypeptide: Thiazole synthase (270 aa).

Catalysis depends on Lys111, which acts as the Schiff-base intermediate with DXP. Residues Gly172, 198–199 (AG), and 220–221 (NT) each bind 1-deoxy-D-xylulose 5-phosphate.

The protein belongs to the ThiG family. As to quaternary structure, homotetramer. Forms heterodimers with either ThiH or ThiS.

It localises to the cytoplasm. The enzyme catalyses [ThiS sulfur-carrier protein]-C-terminal-Gly-aminoethanethioate + 2-iminoacetate + 1-deoxy-D-xylulose 5-phosphate = [ThiS sulfur-carrier protein]-C-terminal Gly-Gly + 2-[(2R,5Z)-2-carboxy-4-methylthiazol-5(2H)-ylidene]ethyl phosphate + 2 H2O + H(+). The protein operates within cofactor biosynthesis; thiamine diphosphate biosynthesis. In terms of biological role, catalyzes the rearrangement of 1-deoxy-D-xylulose 5-phosphate (DXP) to produce the thiazole phosphate moiety of thiamine. Sulfur is provided by the thiocarboxylate moiety of the carrier protein ThiS. In vitro, sulfur can be provided by H(2)S. The sequence is that of Thiazole synthase from Methylococcus capsulatus (strain ATCC 33009 / NCIMB 11132 / Bath).